A 267-amino-acid polypeptide reads, in one-letter code: Acyl-[acyl-carrier-protein]--UDP-N-acetylglucosamine O-acyltransferase (267 aa).

This sequence belongs to the transferase hexapeptide repeat family. LpxA subfamily. Homotrimer.

It is found in the cytoplasm. The enzyme catalyses a (3R)-hydroxyacyl-[ACP] + UDP-N-acetyl-alpha-D-glucosamine = a UDP-3-O-[(3R)-3-hydroxyacyl]-N-acetyl-alpha-D-glucosamine + holo-[ACP]. It functions in the pathway glycolipid biosynthesis; lipid IV(A) biosynthesis; lipid IV(A) from (3R)-3-hydroxytetradecanoyl-[acyl-carrier-protein] and UDP-N-acetyl-alpha-D-glucosamine: step 1/6. Involved in the biosynthesis of lipid A, a phosphorylated glycolipid that anchors the lipopolysaccharide to the outer membrane of the cell. The chain is Acyl-[acyl-carrier-protein]--UDP-N-acetylglucosamine O-acyltransferase from Proteus mirabilis (strain HI4320).